A 206-amino-acid polypeptide reads, in one-letter code: MDKKNEQQEVREENDTSINQESETQVELEEEVVNEECETSSEKTDEKEVDDENVTDINSKLAEKKLQDELDELNDKYQRLQAEYANYRRRTQQEKETIGVFANEKIITELIPVIDSMERALDACEDKEDTMYKGISLVHKQLIDTLVKFGVEEIEAESKEFDPNLHLAVMQESVDGVEANQIVMVLQKGYKLGTKVVRPSMVKVSC.

The span at 1–14 (MDKKNEQQEVREEN) shows a compositional bias: basic and acidic residues. Residues 1–56 (MDKKNEQQEVREENDTSINQESETQVELEEEVVNEECETSSEKTDEKEVDDENVTD) are disordered. Residues 24-39 (TQVELEEEVVNEECET) are compositionally biased toward acidic residues.

It belongs to the GrpE family. In terms of assembly, homodimer.

It is found in the cytoplasm. In terms of biological role, participates actively in the response to hyperosmotic and heat shock by preventing the aggregation of stress-denatured proteins, in association with DnaK and GrpE. It is the nucleotide exchange factor for DnaK and may function as a thermosensor. Unfolded proteins bind initially to DnaJ; upon interaction with the DnaJ-bound protein, DnaK hydrolyzes its bound ATP, resulting in the formation of a stable complex. GrpE releases ADP from DnaK; ATP binding to DnaK triggers the release of the substrate protein, thus completing the reaction cycle. Several rounds of ATP-dependent interactions between DnaJ, DnaK and GrpE are required for fully efficient folding. This chain is Protein GrpE, found in Clostridioides difficile (strain 630) (Peptoclostridium difficile).